The primary structure comprises 190 residues: Recombination protein RecR (190 aa).

The C4-type zinc finger occupies 58–73; that stretch reads CEQCGALSENELCEIC. The 87-residue stretch at 81 to 167 folds into the Toprim domain; it reads NILCIVESPK…TFSKIAQGIP (87 aa).

The protein belongs to the RecR family.

Functionally, may play a role in DNA repair. It seems to be involved in an RecBC-independent recombinational process of DNA repair. It may act with RecF and RecO. The sequence is that of Recombination protein RecR from Campylobacter jejuni subsp. doylei (strain ATCC BAA-1458 / RM4099 / 269.97).